We begin with the raw amino-acid sequence, 377 residues long: Opsin-5 (377 aa).

Topologically, residues 1-33 (MALNHTALPQDERLPHYLRDEDPFASKLSWEAD) are extracellular. Asn4 is a glycosylation site (N-linked (GlcNAc...) asparagine). The helical transmembrane segment at 34–54 (LVAGFYLTIIGILSTFGNGYV) threads the bilayer. Residues 55–74 (LYMSSRRKKKLRPAEIMTIN) lie on the Cytoplasmic side of the membrane. The chain crosses the membrane as a helical span at residues 75-95 (LAVCDLGISVVGKPFTIISCF). Topologically, residues 96–108 (CHRWVFGWFGCRW) are extracellular. A disulfide bond links Cys106 and Cys183. A helical membrane pass occupies residues 109–129 (YGWAGFFFGCGSLITMTAVSL). The Cytoplasmic segment spans residues 130–150 (DRYLKICYLSYGVWLKRKHAY). Residues 151-171 (ICLAVIWAYASFWTTMPLVGL) form a helical membrane-spanning segment. Residues 172–197 (GDYAPEPFGTSCTLDWWLAQASGGGQ) lie on the Extracellular side of the membrane. A helical transmembrane segment spans residues 198 to 218 (VFILSILFFCLLLPTAVIVFS). The Cytoplasmic portion of the chain corresponds to 219-252 (YAKIIAKVKSSSKEVAHFDSRIHSSHVLEVKLTK). The helical transmembrane segment at 253–273 (VAMLICAGFLIAWIPYAVVSV) threads the bilayer. The Extracellular portion of the chain corresponds to 274–288 (WSAFGRPDSIPIQLS). The chain crosses the membrane as a helical span at residues 289–309 (VVPTLLAKSAAMYNPIIYQVI). Lys296 bears the N6-(retinylidene)lysine mark. Residues 310–377 (DYRFACCQAG…HSNDGDCGKK (68 aa)) are Cytoplasmic-facing. Residues Cys315 and Cys316 are each lipidated (S-palmitoyl cysteine). The tract at residues 357-377 (FTSAHVMDGESHSNDGDCGKK) is disordered. Residues 363-377 (MDGESHSNDGDCGKK) show a composition bias toward basic and acidic residues.

This sequence belongs to the G-protein coupled receptor 1 family. Opsin subfamily. Post-translationally, it is uncertain whether Cys-315 or Cys-316 is palmitoylated. Expressed in the brain (at protein level). Weakly expressed in the skin and liver (at protein level). Abundantly expressed in striated muscle cells. Expressed in Math7/Atok7-dependent retinal ganglion cells in the ganglion cell layer (at protein level). Additionally expressed in horizontal and amacrine cells in the inner nuclear layer of the retina (at protein level). Expressed around the base of hair follicles and in epidermal and sebaceous gland cells of the outer ear (at protein level). Abundantly expressed in vibrissae hair follicles and weakly expressed in the vibrissae skin pad, dorsal back skin, and tail.

Its subcellular location is the cell membrane. Its function is as follows. G-protein coupled receptor which selectively activates G(i) type G proteins via ultraviolet A (UVA) light-mediated activation in the retina. Preferentially binds the chromophore 11-cis retinal and is a bistable protein that displays emission peaks at 380 nm (UVA light) and 470 nm (blue light). Required for the light-response in the inner plexiform layer, and contributes to the regulation of the light-response in the nerve fiber layer, via phosphorylated DAT/SLC6A3 dopamine uptake. Involved in local corneal and retinal circadian rhythm photoentrainment via modulation of the UVA light-induced phase-shift of the retina clock. Acts as a circadian photoreceptor in the outer ear and vibrissal pads, via modulation of circadian clock-gene expression in response to violet light during the light-to-dark transition phase and night phase of the circadian cycle. Required in the retina to negatively regulate hyaloid vessel regression during postnatal development via light-dependent OPN5-SLC32A1-DRD2-VEGFR2 signaling. Involved in the light-dependent regulation of retina and vitreous compartment dopamine levels. The protein is Opsin-5 (Opn5) of Mus musculus (Mouse).